Reading from the N-terminus, the 93-residue chain is Mitochondrial import inner membrane translocase subunit TIM10 (93 aa).

Positions 1–31 are interaction with transmembrane regions of transmembrane proteins in transit; that stretch reads MSFLGFGGGQPQLSSQQKIQAAEAELDLVTD. The short motif at 40–65 is the Twin CX3C motif element; the sequence is CYKKCINTSYSEGELNKNESSCLDRC. 2 cysteine pairs are disulfide-bonded: Cys-40–Cys-65 and Cys-44–Cys-61. The interval 73–93 is required for heterohexamerization; the sequence is NVQVGENMQKMGQSFNAAGKF.

The protein belongs to the small Tim family. In terms of assembly, heterohexamer; composed of 3 copies of TIM9 and 3 copies of TIM10, named soluble 70 kDa complex. Associates directly with the TIM12 component of the TIM22 complex, whose core is composed of TIM18, TIM22 and TIM54. Interacts with the transmembrane regions of multi-pass transmembrane proteins in transit.

It is found in the mitochondrion inner membrane. It localises to the mitochondrion intermembrane space. In terms of biological role, mitochondrial intermembrane chaperone that participates in the import and insertion of multi-pass transmembrane proteins into the mitochondrial inner membrane. Also required for the transfer of beta-barrel precursors from the TOM complex to the sorting and assembly machinery (SAM complex) of the outer membrane. Acts as a chaperone-like protein that protects the hydrophobic precursors from aggregation and guide them through the mitochondrial intermembrane space. Compared to TIM9, it may function as a substrate sensor. The polypeptide is Mitochondrial import inner membrane translocase subunit TIM10 (TIM10) (Saccharomyces cerevisiae (strain ATCC 204508 / S288c) (Baker's yeast)).